The primary structure comprises 231 residues: 4-aminobenzoate synthase (231 aa).

Residues Glu-81, His-88, Glu-142, His-174, Asp-178, and His-181 each contribute to the Fe(2+) site.

It belongs to the CADD family. In terms of assembly, homodimer. During infection, interacts with death domains of mammalian tumor necrosis factor (TNF) family receptors Fas, DR4, DR5 and to some extent TNFR1, but not with the respective downstream adapters. It depends on Fe(2+) as a cofactor. Mn(2+) serves as cofactor.

The protein localises to the secreted. It localises to the host cytoplasm. With respect to regulation, the protein is a cosubstrate rather than a true enzyme and is left in an inactive state after a single turnover. Inactive under anaerobic conditions. Functionally, involved in de novo para-aminobenzoate (PABA) biosynthesis. Acts as a self-sacrificing or 'suicide' enzyme that utilizes its own active site tyrosine residue(s) as the substrate for PABA synthesis. The side chain of the tyrosine residue is released from the protein backbone via cleavage of the C(alpha)-C(beta) bond, leaving a glycine in place of the original tyrosine residue. Reaction requires O(2) and a reduced dimetal cofactor. Was also identified as a specific toxin that associates with death domains of tumor necrosis factor family (TNF) receptors and induces apoptosis in mammalian cell lines through a Caspase-dependent mechanism. This is 4-aminobenzoate synthase from Chlamydia trachomatis serovar D (strain ATCC VR-885 / DSM 19411 / UW-3/Cx).